Reading from the N-terminus, the 83-residue chain is Small ribosomal subunit protein bS16 (83 aa).

Belongs to the bacterial ribosomal protein bS16 family.

The polypeptide is Small ribosomal subunit protein bS16 (Pseudomonas aeruginosa (strain LESB58)).